We begin with the raw amino-acid sequence, 248 residues long: Glutathione S-transferase omega-2 (248 aa).

Positions 22–101 constitute a GST N-terminal domain; that stretch reads GVIRIYSMRF…YLDDVYPGRK (80 aa). Cys-32 acts as the Nucleophile in catalysis. Glutathione contacts are provided by residues Lys-59, Ile-72, and 85 to 86; that span reads ES. Positions 106-231 constitute a GST C-terminal domain; sequence DPYERARQKM…VFLGFLNLYF (126 aa).

This sequence belongs to the GST superfamily. Omega family.

The enzyme catalyses RX + glutathione = an S-substituted glutathione + a halide anion + H(+). It carries out the reaction L-dehydroascorbate + 2 glutathione = glutathione disulfide + L-ascorbate. The catalysed reaction is methylarsonate + 2 glutathione + H(+) = methylarsonous acid + glutathione disulfide + H2O. Functionally, exhibits glutathione-dependent thiol transferase activity. Has high dehydroascorbate reductase activity and may contribute to the recycling of ascorbic acid. Participates in the biotransformation of inorganic arsenic and reduces monomethylarsonic acid (MMA). The protein is Glutathione S-transferase omega-2 (Gsto2) of Mus musculus (Mouse).